A 387-amino-acid chain; its full sequence is Galactokinase (387 aa).

33–36 (EHID) provides a ligand contact to substrate. ATP-binding positions include Ser-67 and 124–130 (GAGLSSS). Mg(2+) contacts are provided by Ser-130 and Glu-162. Residue Asp-174 is the Proton acceptor of the active site. Residue Tyr-224 participates in substrate binding.

The protein belongs to the GHMP kinase family. GalK subfamily.

It is found in the cytoplasm. It catalyses the reaction alpha-D-galactose + ATP = alpha-D-galactose 1-phosphate + ADP + H(+). The protein operates within carbohydrate metabolism; galactose metabolism. Functionally, catalyzes the transfer of the gamma-phosphate of ATP to D-galactose to form alpha-D-galactose-1-phosphate (Gal-1-P). In Clostridium perfringens (strain SM101 / Type A), this protein is Galactokinase.